The chain runs to 192 residues: Phosphoheptose isomerase (192 aa).

Residues 34–192 enclose the SIS domain; the sequence is LADALGNGKK…LEKRLFGERR (159 aa). Residue 49 to 51 coordinates substrate; it reads NGG. Zn(2+) contacts are provided by histidine 58 and glutamate 62. Substrate is bound by residues glutamate 62, 91–92, 117–119, serine 122, and glutamine 169; these read ND and STS. Zn(2+)-binding residues include glutamine 169 and histidine 177.

It belongs to the SIS family. GmhA subfamily. In terms of assembly, homotetramer. Requires Zn(2+) as cofactor.

The protein resides in the cytoplasm. The catalysed reaction is 2 D-sedoheptulose 7-phosphate = D-glycero-alpha-D-manno-heptose 7-phosphate + D-glycero-beta-D-manno-heptose 7-phosphate. It participates in carbohydrate biosynthesis; D-glycero-D-manno-heptose 7-phosphate biosynthesis; D-glycero-alpha-D-manno-heptose 7-phosphate and D-glycero-beta-D-manno-heptose 7-phosphate from sedoheptulose 7-phosphate: step 1/1. In terms of biological role, catalyzes the isomerization of sedoheptulose 7-phosphate in D-glycero-D-manno-heptose 7-phosphate. This chain is Phosphoheptose isomerase, found in Geotalea daltonii (strain DSM 22248 / JCM 15807 / FRC-32) (Geobacter daltonii).